Consider the following 359-residue polypeptide: Aromatic amino acid aminotransferase (359 aa).

Lysine 223 carries the post-translational modification N6-(pyridoxal phosphate)lysine.

It belongs to the class-II pyridoxal-phosphate-dependent aminotransferase family. Homodimer. Pyridoxal 5'-phosphate is required as a cofactor.

The catalysed reaction is an aromatic L-alpha-amino acid + 2-oxoglutarate = an aromatic oxo-acid + L-glutamate. In terms of biological role, aminotransferase that catalyzes the conversion of aromatic amino acids and 2-oxoglutarate into corresponding aromatic oxo acids and L-glutamate. The chain is Aromatic amino acid aminotransferase from Streptomyces avermitilis (strain ATCC 31267 / DSM 46492 / JCM 5070 / NBRC 14893 / NCIMB 12804 / NRRL 8165 / MA-4680).